We begin with the raw amino-acid sequence, 405 residues long: Aspartokinase (405 aa).

ACT domains are found at residues 267 to 344 (VSME…AKVS) and 345 to 405 (IVGV…QLDQ).

Belongs to the aspartokinase family.

The enzyme catalyses L-aspartate + ATP = 4-phospho-L-aspartate + ADP. It functions in the pathway amino-acid biosynthesis; L-lysine biosynthesis via DAP pathway; (S)-tetrahydrodipicolinate from L-aspartate: step 1/4. Its pathway is amino-acid biosynthesis; L-methionine biosynthesis via de novo pathway; L-homoserine from L-aspartate: step 1/3. It participates in amino-acid biosynthesis; L-threonine biosynthesis; L-threonine from L-aspartate: step 1/5. The protein is Aspartokinase (lysC) of Helicobacter pylori (strain J99 / ATCC 700824) (Campylobacter pylori J99).